The following is a 464-amino-acid chain: Protein FAM90A7 (464 aa).

3 disordered regions span residues 1-42 (MMAR…DPRL), 69-387 (VPAT…AGHD), and 410-437 (AAPSFHSPEKPGAFLAQSPHVSEKSEAP). 2 stretches are compositionally biased toward basic and acidic residues: residues 74–89 (GKKEGKENLKPWKPRA) and 97–111 (NKDKGEKEERPRQQD). The span at 180–197 (LASLSPLRKASLSSSSSL) shows a compositional bias: low complexity.

This sequence belongs to the FAM90 family.

This is Protein FAM90A7 from Homo sapiens (Human).